A 412-amino-acid chain; its full sequence is Divalent metal cation transporter MntH (412 aa).

Over Met1–Leu19 the chain is Cytoplasmic. Residues Ala20–Ala39 traverse the membrane as a helical segment. The Periplasmic portion of the chain corresponds to Thr40 to Gln51. Residues Leu52–Ala71 form a helical membrane-spanning segment. The Cytoplasmic portion of the chain corresponds to Lys72–Trp95. A helical membrane pass occupies residues Phe96–Ile118. Over Gly119–Gly125 the chain is Periplasmic. Residues Val126–Leu145 form a helical membrane-spanning segment. Over Gln146–Lys155 the chain is Cytoplasmic. The helical transmembrane segment at Val156–Ser175 threads the bilayer. The Periplasmic segment spans residues Gln176–Ala196. Residues Val197–Thr220 form a helical membrane-spanning segment. The Cytoplasmic segment spans residues Gln221–Asp238. A helical membrane pass occupies residues Val239–Ala258. Residues Ala259–Tyr276 are Periplasmic-facing. A helical membrane pass occupies residues Leu277–Ala297. Residues Ala298 to Arg327 are Cytoplasmic-facing. Residues Arg328 to Asp344 traverse the membrane as a helical segment. The Periplasmic portion of the chain corresponds to Pro345–Val350. Residues Met351–Phe370 traverse the membrane as a helical segment. Topologically, residues Thr371–Lys387 are cytoplasmic. A helical membrane pass occupies residues Gln388–Val406. At Gly407–Leu412 the chain is on the periplasmic side.

It belongs to the NRAMP family.

It localises to the cell inner membrane. Functionally, h(+)-stimulated, divalent metal cation uptake system. This is Divalent metal cation transporter MntH from Escherichia coli O127:H6 (strain E2348/69 / EPEC).